A 301-amino-acid chain; its full sequence is MGSRYERLQKIGEGSYGVVFRARDVTTGTIVAVKRIRLEKEEEGVPCTAIREISILKELRHENIVRLLDVCHSEKRLTLVFECMEMDLKKYMDHVGGDLDAGTIQEFMRSLLSGVRFCHERNVLHRDLKPPNLLISREKELKLADFGLGRAFGIPVKKFTQEVVTLWYRSPDVLLGSTQYGTPVDIWSVGCIFAEMAIGAPLFTGKNDADQLLRIFQFLGTPNRQVWPSMDTYPNSSNMLSRPEFQQTLAATCEEQFQTNPAYAKLGPQGIDLLRWLLRYEPSERLTAAQALEHPYFSVEF.

Residues 5–297 (YERLQKIGEG…AAQALEHPYF (293 aa)) enclose the Protein kinase domain. ATP-binding positions include 11 to 19 (IGEGSYGVV) and Lys-34. Phosphoserine is present on Ser-15. Tyr-16 carries the phosphotyrosine modification. The active-site Proton acceptor is Asp-127. Position 160 is a phosphothreonine; by CAK (Thr-160).

Belongs to the protein kinase superfamily. CMGC Ser/Thr protein kinase family. CDC2/CDKX subfamily. Forms a stable but non-covalent complex with a regulatory subunit and with a cyclin.

The catalysed reaction is L-seryl-[protein] + ATP = O-phospho-L-seryl-[protein] + ADP + H(+). It carries out the reaction L-threonyl-[protein] + ATP = O-phospho-L-threonyl-[protein] + ADP + H(+). With respect to regulation, phosphorylation at Ser-15 or Tyr-16 inactivates the enzyme, while phosphorylation at Thr-160 activates it. Probably involved in the control of the cell cycle. This Trypanosoma brucei brucei protein is Cell division control protein 2 homolog 1 (CRK1).